Reading from the N-terminus, the 341-residue chain is UDP-N-acetylenolpyruvoylglucosamine reductase (341 aa).

The FAD-binding PCMH-type domain occupies 13-185 (FGVEQSCLSM…TAVGLRLPKA (173 aa)). R161 is an active-site residue. S231 acts as the Proton donor in catalysis. Residue E327 is part of the active site.

It belongs to the MurB family. FAD is required as a cofactor.

The protein resides in the cytoplasm. It carries out the reaction UDP-N-acetyl-alpha-D-muramate + NADP(+) = UDP-N-acetyl-3-O-(1-carboxyvinyl)-alpha-D-glucosamine + NADPH + H(+). Its pathway is cell wall biogenesis; peptidoglycan biosynthesis. In terms of biological role, cell wall formation. This chain is UDP-N-acetylenolpyruvoylglucosamine reductase, found in Shewanella sp. (strain MR-7).